Here is a 279-residue protein sequence, read N- to C-terminus: Proteasome subunit beta (279 aa).

The propeptide at 1 to 53 (MAAAFDPSGRLPDLFTSAGTSSFSAFLSMAAPELLPGRRPLPPGTAADLTPHA) is removed in mature form; by autocatalysis. The active-site Nucleophile is the Thr-54.

Belongs to the peptidase T1B family. The 20S proteasome core is composed of 14 alpha and 14 beta subunits that assemble into four stacked heptameric rings, resulting in a barrel-shaped structure. The two inner rings, each composed of seven catalytic beta subunits, are sandwiched by two outer rings, each composed of seven alpha subunits. The catalytic chamber with the active sites is on the inside of the barrel. Has a gated structure, the ends of the cylinder being occluded by the N-termini of the alpha-subunits. Is capped by the proteasome-associated ATPase, ARC.

Its subcellular location is the cytoplasm. The catalysed reaction is Cleavage of peptide bonds with very broad specificity.. It participates in protein degradation; proteasomal Pup-dependent pathway. The formation of the proteasomal ATPase ARC-20S proteasome complex, likely via the docking of the C-termini of ARC into the intersubunit pockets in the alpha-rings, may trigger opening of the gate for substrate entry. Interconversion between the open-gate and close-gate conformations leads to a dynamic regulation of the 20S proteasome proteolysis activity. Its function is as follows. Component of the proteasome core, a large protease complex with broad specificity involved in protein degradation. The sequence is that of Proteasome subunit beta from Salinispora arenicola (strain CNS-205).